We begin with the raw amino-acid sequence, 299 residues long: Ethylmalonyl-CoA decarboxylase (299 aa).

K209 is modified (N6-acetyllysine; alternate). Residue K209 is modified to N6-succinyllysine; alternate. At K293 the chain carries N6-succinyllysine.

The protein belongs to the enoyl-CoA hydratase/isomerase family.

Its subcellular location is the cytoplasm. It is found in the cytosol. The catalysed reaction is (2S)-ethylmalonyl-CoA + H(+) = butanoyl-CoA + CO2. The enzyme catalyses (S)-methylmalonyl-CoA + H(+) = propanoyl-CoA + CO2. It catalyses the reaction (2R)-ethylmalonyl-CoA + H(+) = butanoyl-CoA + CO2. Decarboxylates ethylmalonyl-CoA, a potentially toxic metabolite, to form butyryl-CoA, suggesting it might be involved in metabolite proofreading. Acts preferentially on (S)-ethylmalonyl-CoA but also has some activity on the (R)-isomer. Also has methylmalonyl-CoA decarboxylase activity at lower level. This Rattus norvegicus (Rat) protein is Ethylmalonyl-CoA decarboxylase (Echdc1).